We begin with the raw amino-acid sequence, 589 residues long: Malto-oligosyltrehalose trehalohydrolase (589 aa).

256-261 (GFDAVH) lines the substrate pocket. Asp-258 (nucleophile) is an active-site residue. Glu-295 functions as the Proton donor in the catalytic mechanism. Substrate-binding positions include 320 to 324 (DDFHT) and 390 to 395 (HDQIGN).

This sequence belongs to the glycosyl hydrolase 13 family.

The protein localises to the cytoplasm. The enzyme catalyses hydrolysis of (1-&gt;4)-alpha-D-glucosidic linkage in 4-alpha-D-[(1-&gt;4)-alpha-D-glucanosyl]n trehalose to yield trehalose and (1-&gt;4)-alpha-D-glucan.. Its pathway is glycan biosynthesis; trehalose biosynthesis. The protein is Malto-oligosyltrehalose trehalohydrolase (treZ) of Brevibacterium helvolum.